We begin with the raw amino-acid sequence, 1053 residues long: CRISPR-associated endonuclease Cas9 (1053 aa).

The tract at residues 1 to 41 is ruvC-I; the sequence is MKRNYILGLDIGITSVGYGIIDYETRDVIDAGVRLFKEANV. Asp10 functions as the For RuvC-like nuclease domain in the catalytic mechanism. Residue Asp10 participates in Mg(2+) binding. The segment at 41–426 is recognition lobe; the sequence is VENNEGRRSK…IFNRLKLVPK (386 aa). The ruvC-II stretch occupies residues 435 to 481; sequence EIPTTLVDDFILSPVVKRSFIQSIKVINAIIKKYGLPNDIIIELARE. Positions 477 and 481 each coordinate Mg(2+). An HNH Cas9-type domain is found at 480–646; sequence REKNSKDAQK…VQKDFINRNL (167 aa). His557 (proton acceptor for HNH nuclease domain) is an active-site residue. The tract at residues 650–775 is ruvC-III; sequence RYATRGLMNL…FKDYKYSHRV (126 aa). Mg(2+) is bound at residue His701. Tyr789 contacts RNA. PAM substrate-binding regions lie at residues 882–889 and 985–993; these read YYGNKLNA and NNDLLNRIE. Residues 910-1053 are PAM-interacting domain (PI); the sequence is KPYRFDVYLD…KKHPQIIKKG (144 aa).

It belongs to the CRISPR-associated Cas9 family. Subtype II-A subfamily. As to quaternary structure, monomer. Binds crRNA and tracrRNA. Mg(2+) serves as cofactor.

Functionally, CRISPR (clustered regularly interspaced short palindromic repeat) is an adaptive immune system that provides protection against mobile genetic elements (viruses, transposable elements and conjugative plasmids). CRISPR clusters contain spacers, sequences complementary to antecedent mobile elements, and target invading nucleic acids. CRISPR clusters are transcribed and processed into CRISPR RNA (crRNA). In type II CRISPR systems correct processing of pre-crRNA requires a trans-encoded small RNA (tracrRNA), endogenous ribonuclease 3 (rnc) and this protein. The tracrRNA serves as a guide for ribonuclease 3-aided processing of pre-crRNA. Subsequently Cas9/crRNA/tracrRNA endonucleolytically cleaves linear or circular dsDNA target complementary to the spacer; Cas9 is inactive in the absence of the 2 guide RNAs (gRNA). Cas9 recognizes the protospacer adjacent motif (PAM) in the CRISPR repeat sequences to help distinguish self versus nonself, as targets within the bacterial CRISPR locus do not have PAMs. PAM recognition is also required for catalytic activity. In Staphylococcus aureus, this protein is CRISPR-associated endonuclease Cas9.